Consider the following 94-residue polypeptide: DNA-directed RNA polymerase subunit omega (94 aa).

Belongs to the RNA polymerase subunit omega family. As to quaternary structure, the RNAP catalytic core consists of 2 alpha, 1 beta, 1 beta' and 1 omega subunit. When a sigma factor is associated with the core the holoenzyme is formed, which can initiate transcription.

The enzyme catalyses RNA(n) + a ribonucleoside 5'-triphosphate = RNA(n+1) + diphosphate. Promotes RNA polymerase assembly. Latches the N- and C-terminal regions of the beta' subunit thereby facilitating its interaction with the beta and alpha subunits. In Bifidobacterium animalis subsp. lactis (strain AD011), this protein is DNA-directed RNA polymerase subunit omega.